The chain runs to 81 residues: Large ribosomal subunit protein bL31B (81 aa).

It belongs to the bacterial ribosomal protein bL31 family. Type B subfamily. As to quaternary structure, part of the 50S ribosomal subunit.

This is Large ribosomal subunit protein bL31B from Listeria innocua serovar 6a (strain ATCC BAA-680 / CLIP 11262).